A 471-amino-acid chain; its full sequence is Alpha-galactosidase (471 aa).

Positions methionine 1 to glycine 18 are cleaved as a signal peptide. Cysteine 42 and cysteine 74 form a disulfide bridge. 2 residues coordinate substrate: aspartate 72 and aspartate 73. Asparagine 82 carries N-linked (GlcNAc...) asparagine glycosylation. Cysteine 121 and cysteine 151 are joined by a disulfide. Lysine 147 serves as a coordination point for substrate. Aspartate 149 serves as the catalytic Nucleophile. The N-linked (GlcNAc...) asparagine glycan is linked to asparagine 175. Residue arginine 205 coordinates substrate. Aspartate 209 functions as the Proton donor in the catalytic mechanism. Cystine bridges form between cysteine 221-cysteine 237 and cysteine 223-cysteine 230. Glutamine 251 is a substrate binding site. Residues asparagine 270, asparagine 403, asparagine 412, asparagine 417, asparagine 422, asparagine 435, and asparagine 454 are each glycosylated (N-linked (GlcNAc...) asparagine).

Belongs to the glycosyl hydrolase 27 family. Homotetramer.

The protein localises to the secreted. It catalyses the reaction Hydrolysis of terminal, non-reducing alpha-D-galactose residues in alpha-D-galactosides, including galactose oligosaccharides, galactomannans and galactolipids.. The sequence is that of Alpha-galactosidase (MEL) from Saccharomyces pastorianus (strain ATCC 76529 / Carlsberg bottom yeast no.1 / CBS 1513 / CLIB 176 / NBRC 1167 / NCYC 396 / NRRL Y-12693) (Saaz-type lager yeast).